A 438-amino-acid chain; its full sequence is ATP-dependent RNA helicase RhlB (438 aa).

A Q motif motif is present at residues 9–37 (QRFADLPLHPEVKQALAENGFEFCTPIQA). Residues 40 to 219 (LPVLLQSKDI…YDHMNEPVKV (180 aa)) form the Helicase ATP-binding domain. 53–60 (AQTGTGKT) contributes to the ATP binding site. A DEAD box motif is present at residues 165–168 (DEAD). The Helicase C-terminal domain maps to 243-390 (KMRLLLTLIE…VSNYDSEALL (148 aa)). The interval 395-438 (TPAKIHRKHPSGTRNLRDRSGTSRPGAQRSGARPPRHDRTRRHS) is disordered. Over residues 428-438 (PPRHDRTRRHS) the composition is skewed to basic residues.

The protein belongs to the DEAD box helicase family. RhlB subfamily. As to quaternary structure, component of the RNA degradosome, which is a multiprotein complex involved in RNA processing and mRNA degradation.

Its subcellular location is the cytoplasm. The enzyme catalyses ATP + H2O = ADP + phosphate + H(+). Its function is as follows. DEAD-box RNA helicase involved in RNA degradation. Has RNA-dependent ATPase activity and unwinds double-stranded RNA. The polypeptide is ATP-dependent RNA helicase RhlB (Shewanella baltica (strain OS223)).